Reading from the N-terminus, the 534-residue chain is Coiled-coil domain-containing protein 183 (534 aa).

3 coiled-coil regions span residues 10-54, 136-209, and 323-396; these read EEQT…NIRR, DASK…DMKI, and LAQR…HSNM.

The polypeptide is Coiled-coil domain-containing protein 183 (CCDC183) (Homo sapiens (Human)).